A 284-amino-acid chain; its full sequence is MTGSLNRHSLLNGVKKMRIILCDTNEVVTNLWQESIPHAYIQNDKYLCIHHGHLQSLMDSMRKGDAIHHGHSYAIVSPGNSYGYLGGGFDKALYNYFGGKPFETWFRNQLGGRYHTVGSATVVDLQRCLEEKTIECRDGIRYIIHVPTVVAPSAPIFNPQNPLKTGFEPVFNAMWNALMHSPKDIDGLIIPGLCTGYAGVPPIISCKSMAFALRLYMAGDHISKELKNVLIMYYLQYPFEPFFPESCKIECQKLGIDIEMLKSFNVEKDAIELLIPRRILTLDL.

The substrate site is built by aspartate 23, glutamine 55, asparagine 80, and aspartate 90. Residues 34-230 enclose the Macro domain; the sequence is ESIPHAYIQN…HISKELKNVL (197 aa). Residues asparagine 80 and aspartate 90 contribute to the active site. An intrachain disulfide couples cysteine 128 to cysteine 136. Histidine 145 is a catalytic residue. Positions 148 and 195 each coordinate substrate.

Homodimer.

It catalyses the reaction ADP-alpha-D-ribose 1''-phosphate + H2O = ADP-D-ribose + phosphate. Highly specific phosphatase involved in the metabolism of ADP-ribose 1''-phosphate (Appr1p) which is produced as a consequence of tRNA splicing. + phosphate. The polypeptide is Probable ADP-ribose 1''-phosphate phosphatase YML087W (Saccharomyces cerevisiae (strain ATCC 204508 / S288c) (Baker's yeast)).